The primary structure comprises 1892 residues: Plexin A3 (1892 aa).

The N-terminal stretch at 1–20 is a signal peptide; it reads MRSLWLLVFSFSVLTGTNMA. The Sema domain occupies 21 to 509; it reads FPMILSERPE…SDKQVSRLPV (489 aa). The Extracellular segment spans residues 21-1240; sequence FPMILSERPE…IYSDSTLTLP (1220 aa). A glycan (N-linked (GlcNAc...) asparagine) is linked at Asn68. Intrachain disulfides connect Cys86-Cys95, Cys121-Cys129, Cys283-Cys404, Cys299-Cys355, Cys373-Cys392, Cys512-Cys529, Cys518-Cys560, Cys521-Cys538, and Cys532-Cys544. Residue Asn569 is glycosylated (N-linked (GlcNAc...) asparagine). Cys595 and Cys615 are oxidised to a cystine. 4 IPT/TIG domains span residues 861 to 955, 957 to 1041, 1044 to 1143, and 1146 to 1232; these read PRIT…YSFV, PSFS…YIYT, PNIS…FTYY, and PTFE…LHIY. Asn1183 carries N-linked (GlcNAc...) asparagine glycosylation. A helical transmembrane segment spans residues 1241-1261; sequence AIIGIGAGGGVLLIAIIAVLI. Residues 1262 to 1315 adopt a coiled-coil conformation; it reads AYKRKTRDADRTLKRLQLQMDNLESRVALECKEAFAELQTDIQELTNDMDGVKI. At 1262–1892 the chain is on the cytoplasmic side; the sequence is AYKRKTRDAD…QAINLMSGSS (631 aa).

Belongs to the plexin family. In terms of tissue distribution, detected in primary motor neurons in the embryonic nervous system.

The protein resides in the cell membrane. Its function is as follows. Coreceptor for class 3 semaphorins. Necessary for signaling by class 3 semaphorins and subsequent remodeling of the cytoskeleton. Plays a role in axon guidance in the developing nervous system. Class 3 semaphorins bind to a complex composed of a neuropilin and a plexin. The plexin modulates the affinity of the complex for specific semaphorins, and its cytoplasmic domain is required for the activation of down-stream signaling events in the cytoplasm. The sequence is that of Plexin A3 (plxna3) from Danio rerio (Zebrafish).